A 1349-amino-acid polypeptide reads, in one-letter code: ABC multidrug transporter G (1349 aa).

Positions 51-299 (RQFLGFLKGS…FEDMGFVCPK (249 aa)) constitute an ABC transporter 1 domain. Asparagine 144 is a glycosylation site (N-linked (GlcNAc...) asparagine). A run of 4 helical transmembrane segments spans residues 407-427 (LSLI…GSLF), 436-456 (SIFL…LESM), 492-512 (IPVV…MAAL), and 523-543 (WIIV…VGAL). An N-linked (GlcNAc...) asparagine glycan is attached at asparagine 549. 2 consecutive transmembrane segments (helical) span residues 550 to 570 (ASKI…YLIP) and 580 to 600 (WIFY…NEFV). N-linked (GlcNAc...) asparagine glycosylation occurs at asparagine 649. Residues 659-679 (FGVIIGFWVFFIVLTALGLEL) form a helical membrane-spanning segment. The ABC transporter 2 domain maps to 721-963 (FTWHDLDYHV…VLDYFARHGA (243 aa)). 757–764 (GCSGAGKT) is a binding site for ATP. Asparagine 994 carries N-linked (GlcNAc...) asparagine glycosylation. Helical transmembrane passes span 1056 to 1076 (VILH…IGDG), 1085 to 1105 (FAIF…QPFF), 1121 to 1143 (IYHW…ILCA), 1166 to 1186 (MYLQ…GIAA), 1193 to 1213 (FAAV…CGVV), and 1226 to 1246 (WLYY…EVLW). Asparagine 1287 is a glycosylation site (N-linked (GlcNAc...) asparagine). The chain crosses the membrane as a helical span at residues 1318 to 1338 (TGITALFCVSSYAMVFLMMKL).

This sequence belongs to the ABC transporter superfamily. ABCG family. PDR (TC 3.A.1.205) subfamily.

The protein localises to the cell membrane. Functionally, ABC efflux transporter that seems not to be able to transport azoles, nor rhodamine 6G (R-6G), a known substrate for many ABC transporters. The protein is ABC multidrug transporter G of Aspergillus fumigatus (strain ATCC MYA-4609 / CBS 101355 / FGSC A1100 / Af293) (Neosartorya fumigata).